A 542-amino-acid chain; its full sequence is TNF receptor-associated factor 6 (542 aa).

The disordered stretch occupies residues 32–54 (ESFLSPTENPSTISVSSSMPPDQ). Over residues 35–52 (LSPTENPSTISVSSSMPP) the composition is skewed to polar residues. Residues 71–110 (CPICLMGLRSAVQTPCGHRFCDSCIRKSIRDTGQKCPVDN) form an RING-type; degenerate zinc finger. TRAF-type zinc fingers lie at residues 151–203 (KHLS…AVKQ) and 204–260 (NHEQ…NELA). Residues 311-373 (QCKQELLNLR…STRELEAQQY (63 aa)) adopt a coiled-coil conformation. Positions 374-520 (QGIYVWRVEN…EDVLLVRCEV (147 aa)) constitute an MATH domain. Residue 489–496 (PKGFGYVT) coordinates substrate.

It belongs to the TNF receptor-associated factor family. A subfamily. As to quaternary structure, homotrimer. Homooligomer.

The protein localises to the cytoplasm. The protein resides in the cell cortex. Its subcellular location is the nucleus. It localises to the lipid droplet. It carries out the reaction S-ubiquitinyl-[E2 ubiquitin-conjugating enzyme]-L-cysteine + [acceptor protein]-L-lysine = [E2 ubiquitin-conjugating enzyme]-L-cysteine + N(6)-ubiquitinyl-[acceptor protein]-L-lysine.. It functions in the pathway protein modification; protein ubiquitination. E3 ubiquitin ligase that, together with UBE2N and UBE2V1, mediates the synthesis of 'Lys-63'-linked-polyubiquitin chains conjugated to proteins, such as IKBKG, IRAK1, AKT1 and AKT2. Also mediates ubiquitination of free/unanchored polyubiquitin chain that leads to MAP3K7 activation. The protein is TNF receptor-associated factor 6 (traf6) of Danio rerio (Zebrafish).